We begin with the raw amino-acid sequence, 173 residues long: ATP-dependent protease subunit HslV (173 aa).

Thr2 is an active-site residue. The Na(+) site is built by Gly158, Asp161, and Ser164.

It belongs to the peptidase T1B family. HslV subfamily. A double ring-shaped homohexamer of HslV is capped on each side by a ring-shaped HslU homohexamer. The assembly of the HslU/HslV complex is dependent on binding of ATP.

Its subcellular location is the cytoplasm. The enzyme catalyses ATP-dependent cleavage of peptide bonds with broad specificity.. Its activity is regulated as follows. Allosterically activated by HslU binding. Its function is as follows. Protease subunit of a proteasome-like degradation complex believed to be a general protein degrading machinery. This Glaesserella parasuis serovar 5 (strain SH0165) (Haemophilus parasuis) protein is ATP-dependent protease subunit HslV.